A 153-amino-acid polypeptide reads, in one-letter code: Bkd operon transcriptional regulator (153 aa).

Residues 4 to 65 (LDRIDLKILR…RLDEERLSGA (62 aa)) enclose the HTH asnC-type domain. Residues 23-42 (WRDLAQKVGLSLTPTLRRVR) constitute a DNA-binding region (H-T-H motif).

In terms of biological role, positive regulator of the bkd operon for branched-chain keto acid dehydrogenase complex. The sequence is that of Bkd operon transcriptional regulator (bkdR) from Pseudomonas aeruginosa (strain ATCC 15692 / DSM 22644 / CIP 104116 / JCM 14847 / LMG 12228 / 1C / PRS 101 / PAO1).